A 636-amino-acid polypeptide reads, in one-letter code: Biosynthetic arginine decarboxylase (636 aa).

Lysine 101 is modified (N6-(pyridoxal phosphate)lysine). A substrate-binding site is contributed by 286-296 (FDVGGGLAVDY).

Belongs to the Orn/Lys/Arg decarboxylase class-II family. SpeA subfamily. Requires Mg(2+) as cofactor. Pyridoxal 5'-phosphate serves as cofactor.

It catalyses the reaction L-arginine + H(+) = agmatine + CO2. Its pathway is amine and polyamine biosynthesis; agmatine biosynthesis; agmatine from L-arginine: step 1/1. In terms of biological role, catalyzes the biosynthesis of agmatine from arginine. In Shewanella amazonensis (strain ATCC BAA-1098 / SB2B), this protein is Biosynthetic arginine decarboxylase.